The chain runs to 185 residues: A-type ATP synthase subunit E (185 aa).

It belongs to the V-ATPase E subunit family. As to quaternary structure, has multiple subunits with at least A(3), B(3), C, D, E, F, H, I and proteolipid K(x).

It is found in the cell membrane. Its function is as follows. Component of the A-type ATP synthase that produces ATP from ADP in the presence of a proton gradient across the membrane. The polypeptide is A-type ATP synthase subunit E (Thermoplasma acidophilum (strain ATCC 25905 / DSM 1728 / JCM 9062 / NBRC 15155 / AMRC-C165)).